Here is a 361-residue protein sequence, read N- to C-terminus: Membrane-bound lytic murein transglycosylase B (361 aa).

Positions methionine 1–alanine 18 are cleaved as a signal peptide. Cysteine 19 is lipidated: N-palmitoyl cysteine. A lipid anchor (S-diacylglycerol cysteine) is attached at cysteine 19. Glutamate 162 is a catalytic residue.

In terms of assembly, monomer.

Its subcellular location is the cell outer membrane. It catalyses the reaction Exolytic cleavage of the (1-&gt;4)-beta-glycosidic linkage between N-acetylmuramic acid (MurNAc) and N-acetylglucosamine (GlcNAc) residues in peptidoglycan, from either the reducing or the non-reducing ends of the peptidoglycan chains, with concomitant formation of a 1,6-anhydrobond in the MurNAc residue.. In terms of biological role, murein-degrading enzyme. Catalyzes the cleavage of the glycosidic bonds between N-acetylmuramic acid and N-acetylglucosamine residues in peptidoglycan. May play a role in recycling of muropeptides during cell elongation and/or cell division. In Escherichia coli (strain K12), this protein is Membrane-bound lytic murein transglycosylase B (mltB).